We begin with the raw amino-acid sequence, 147 residues long: 3-dehydroquinate dehydratase (147 aa).

Catalysis depends on Tyr23, which acts as the Proton acceptor. Residues Asn75, His81, and Asp88 each contribute to the substrate site. His101 functions as the Proton donor in the catalytic mechanism. Substrate-binding positions include 102–103 (LS) and Arg112.

This sequence belongs to the type-II 3-dehydroquinase family. As to quaternary structure, homododecamer.

The enzyme catalyses 3-dehydroquinate = 3-dehydroshikimate + H2O. It participates in metabolic intermediate biosynthesis; chorismate biosynthesis; chorismate from D-erythrose 4-phosphate and phosphoenolpyruvate: step 3/7. Functionally, catalyzes a trans-dehydration via an enolate intermediate. The sequence is that of 3-dehydroquinate dehydratase from Stenotrophomonas maltophilia (strain K279a).